We begin with the raw amino-acid sequence, 391 residues long: MTWLKQMWSSILVLAVVVIGARAVPITYLESAVAKGAVCLDGSAPAYHFDKGSGSGVNNWIVHMEGGGWCTDIATCVQRKSTMKGSSKLMNKDFGFSGILGGKQSTNPDFYNWNRIKVRYCDGSSFTGDIEAVDPTHKLFFRGARVWRAVIDDLMAKGMSNAQNAILSGCSAGALAAILHCDQFKSTLPKTAKVKCVSDAGYFIHGKDITGGSYIQSYYAKVVATHGSAKSLPASCTSSMKPDLCFFPQYVAKTLQTPLFVINAAFDSWQIKNVLAPTSVDKSKAWKTCKLDLKKCTAAQLQTVQGYRDQVLAALAPVRSATTNGLFLDSCHAHCQGGSAATWSGDKGPTVANTKMAKAVGDWFFERSTFQNVDCSSLNCNPTCPAVSTED.

Positions 1 to 23 are cleaved as a signal peptide; sequence MTWLKQMWSSILVLAVVVIGARA. Catalysis depends on charge relay system residues Ser171, Asp267, and His334.

Belongs to the pectinacetylesterase family.

It is found in the secreted. The protein localises to the cell wall. Its function is as follows. Hydrolyzes acetyl esters in homogalacturonan regions of pectin. In type I primary cell wall, galacturonic acid residues of pectin can be acetylated at the O-2 and O-3 positions. Decreasing the degree of acetylation of pectin gels in vitro alters their physical properties. The sequence is that of Pectin acetylesterase 11 from Arabidopsis thaliana (Mouse-ear cress).